The following is a 221-amino-acid chain: Germin-like protein subfamily 1 member 15 (221 aa).

The N-terminal stretch at 1–21 (MKVSMSLILITFWALVTIAKA) is a signal peptide. A disulfide bridge connects residues Cys-31 and Cys-48. Positions 62–213 (SGLNQAGITN…AFQLDVNVVK (152 aa)) constitute a Cupin type-1 domain. An N-linked (GlcNAc...) asparagine glycan is attached at Asn-77. Residues His-110, His-112, Glu-117, and His-159 each coordinate Mn(2+).

The protein belongs to the germin family. As to quaternary structure, oligomer (believed to be a pentamer but probably hexamer).

Its subcellular location is the secreted. It is found in the extracellular space. It localises to the apoplast. In terms of biological role, may play a role in plant defense. Probably has no oxalate oxidase activity even if the active site is conserved. This Arabidopsis thaliana (Mouse-ear cress) protein is Germin-like protein subfamily 1 member 15.